Reading from the N-terminus, the 545-residue chain is Betaine receptor acr-23 (545 aa).

The signal sequence occupies residues 1–19 (MHRIYTFLIFISQLALGLS). Over 20-244 (NNPDIPIQYE…DVVIQRKPLY (225 aa)) the chain is Extracellular. N-linked (GlcNAc...) asparagine glycans are attached at residues Asn-53 and Asn-97. 2 disulfides stabilise this stretch: Cys-157-Cys-171 and Cys-224-Cys-225. The N-linked (GlcNAc...) asparagine glycan is linked to Asn-228. The chain crosses the membrane as a helical span at residues 245 to 265 (YVLNLIAPTAVITFISIIGFF). N-linked (GlcNAc...) asparagine glycosylation is present at Asn-276. 2 helical membrane passes run 287 to 307 (EKITLGITTLLSMSIMIFMVS) and 317 to 337 (VPLIALFYTLMITIISVGTLA). Residues 338–512 (ASSVIFVQKL…WDWVAAVLER (175 aa)) lie on the Cytoplasmic side of the membrane. The chain crosses the membrane as a helical span at residues 513 to 533 (VFLIFFTICFLFSAIGINLYG).

This sequence belongs to the ligand-gated ion channel (TC 1.A.9) family. Acetylcholine receptor (TC 1.A.9.1) subfamily. As to expression, expressed in the body wall muscles that are arranged into four longitudinal bundles, some mechanosensory neurons, the head muscles and multiple interneurons. Not expressed in motor neurons (at protein level).

The protein localises to the cell membrane. Betaine receptor that functions as a ligand-gated non-selective monovalent cation channel in mechanosensory neurons to maintain basal levels of locomotion. The channel is permeable to Na(+) and K(+) but not to Ba(2+) or Ca(2+) ions. Elicits current in response to betaine, very weak current in response to choline, virtually no current in response to acetylcholine and nicotine, and no current in response to glycine and GABA. The protein is Betaine receptor acr-23 of Caenorhabditis elegans.